Consider the following 207-residue polypeptide: Small ribosomal subunit protein uS4 (207 aa).

Basic and acidic residues predominate over residues S29–P38. A disordered region spans residues S29–L54. The segment covering G42–Y52 has biased composition (polar residues). Residues S97–L160 form the S4 RNA-binding domain.

Belongs to the universal ribosomal protein uS4 family. As to quaternary structure, part of the 30S ribosomal subunit. Contacts protein S5. The interaction surface between S4 and S5 is involved in control of translational fidelity.

In terms of biological role, one of the primary rRNA binding proteins, it binds directly to 16S rRNA where it nucleates assembly of the body of the 30S subunit. Its function is as follows. With S5 and S12 plays an important role in translational accuracy. The chain is Small ribosomal subunit protein uS4 from Polaromonas naphthalenivorans (strain CJ2).